Here is a 361-residue protein sequence, read N- to C-terminus: Solute carrier family 25 member 3 (361 aa).

Residues 1–49 constitute a mitochondrion transit peptide; sequence MFSSVAHLARANPFNTPHLQLVHDGLGDFRSRPPGPTGQPRRPRNLAAA. Positions 25–44 are disordered; that stretch reads GLGDFRSRPPGPTGQPRRPR. Residues 50–62 are Mitochondrial intermembrane-facing; that stretch reads AVEEYSCEFGSAK. 3 Solcar repeats span residues 62–146, 159–243, and 260–338; these read KYYA…FKVL, WRTS…TVEA, and EQLV…VKVY. Residues 63–85 form a helical membrane-spanning segment; that stretch reads YYALCGFGGVLSCGLTHTAVVPL. The Mitochondrial matrix portion of the chain corresponds to 86-120; sequence DLVKCRMQVDPQKYKGIFNGFSVTLKEDGVRGLAK. Lysine 98 carries the post-translational modification N6-acetyllysine. Lysine 111 is modified (N6-methyllysine). The helical transmembrane segment at 121-140 threads the bilayer; that stretch reads GWAPTFLGYSMQGLCKFGFY. The Mitochondrial intermembrane portion of the chain corresponds to 141–160; it reads EVFKVLYSNMLGEENTYLWR. The chain crosses the membrane as a helical span at residues 161–182; that stretch reads TSLYLAASASAEFFADIALAPM. Over 183–217 the chain is Mitochondrial matrix; it reads EAAKVRIQTQPGYANTLRDAAPKMYKEEGLKAFYK. Phosphotyrosine is present on tyrosine 195. Lysine 208 carries the N6-acetyllysine modification. A helical transmembrane segment spans residues 218–237; that stretch reads GVAPLWMRQIPYTMMKFACF. At 238–260 the chain is on the mitochondrial intermembrane side; sequence ERTVEALYKFVVPKPRSECSKPE. The chain crosses the membrane as a helical span at residues 261–283; the sequence is QLVVTFVAGYIAGVFCAIVSHPA. Over 284 to 313 the chain is Mitochondrial matrix; sequence DSVVSVLNKEKGSSASLVLKRLGFKGVWKG. The helical transmembrane segment at 314 to 332 threads the bilayer; it reads LFARIIMIGTLTALQWFIY. Over 333-361 the chain is Mitochondrial intermembrane; the sequence is DSVKVYFRLPRPPPPEMPESLKKKLGLTQ.

Belongs to the mitochondrial carrier (TC 2.A.29) family. In terms of assembly, interacts with PPIF; the interaction is impaired by CsA.

The protein resides in the mitochondrion inner membrane. The enzyme catalyses phosphate(in) + H(+)(in) = phosphate(out) + H(+)(out). Inorganic ion transporter that transports phosphate or copper ions across the mitochondrial inner membrane into the matrix compartment. Mediates proton-coupled symport of phosphate ions necessary for mitochondrial oxidative phosphorylation of ADP to ATP. Transports copper ions probably in the form of anionic copper(I) complexes to maintain mitochondrial matrix copper pool and to supply copper for cytochrome C oxidase complex assembly. May also play a role in regulation of the mitochondrial permeability transition pore (mPTP). This is Solute carrier family 25 member 3 from Pongo abelii (Sumatran orangutan).